The following is a 464-amino-acid chain: Methionine aminopeptidase 2 (464 aa).

Residues 1–86 (MGSKTPGNHR…RKKKKKNTKE (86 aa)) are disordered. A compositionally biased stretch (acidic residues) spans 43–54 (GESEGGEDEDDD). Residues 72-83 (KRNKRRKKKKKN) are compositionally biased toward basic residues. His-216 serves as a coordination point for substrate. Positions 237, 248, and 317 each coordinate a divalent metal cation. Substrate is bound at residue His-325. The a divalent metal cation site is built by Glu-350 and Glu-445.

This sequence belongs to the peptidase M24A family. Methionine aminopeptidase eukaryotic type 2 subfamily. It depends on Co(2+) as a cofactor. Requires Zn(2+) as cofactor. The cofactor is Mn(2+). Fe(2+) serves as cofactor.

It localises to the cytoplasm. It catalyses the reaction Release of N-terminal amino acids, preferentially methionine, from peptides and arylamides.. In terms of biological role, cotranslationally removes the N-terminal methionine from nascent proteins. The N-terminal methionine is often cleaved when the second residue in the primary sequence is small and uncharged (Met-Ala-, Cys, Gly, Pro, Ser, Thr, or Val). In Ajellomyces capsulatus (strain NAm1 / WU24) (Darling's disease fungus), this protein is Methionine aminopeptidase 2.